A 486-amino-acid polypeptide reads, in one-letter code: Malonate-semialdehyde dehydrogenase (486 aa).

NAD(+) contacts are provided by phenylalanine 154, lysine 178, glutamate 181, arginine 182, and serine 231. The active-site Nucleophile is cysteine 286. Glutamate 386 is a binding site for NAD(+).

It belongs to the aldehyde dehydrogenase family. IolA subfamily. In terms of assembly, homotetramer.

The enzyme catalyses 3-oxopropanoate + NAD(+) + CoA + H2O = hydrogencarbonate + acetyl-CoA + NADH + H(+). The catalysed reaction is 2-methyl-3-oxopropanoate + NAD(+) + CoA + H2O = propanoyl-CoA + hydrogencarbonate + NADH + H(+). The protein operates within polyol metabolism; myo-inositol degradation into acetyl-CoA; acetyl-CoA from myo-inositol: step 7/7. Catalyzes the oxidation of malonate semialdehyde (MSA) and methylmalonate semialdehyde (MMSA) into acetyl-CoA and propanoyl-CoA, respectively. Is involved in a myo-inositol catabolic pathway. Bicarbonate, and not CO2, is the end-product of the enzymatic reaction. The polypeptide is Malonate-semialdehyde dehydrogenase (Bacillus cereus (strain ATCC 14579 / DSM 31 / CCUG 7414 / JCM 2152 / NBRC 15305 / NCIMB 9373 / NCTC 2599 / NRRL B-3711)).